The primary structure comprises 505 residues: Lysine--tRNA ligase (505 aa).

Mg(2+) is bound by residues glutamate 415 and glutamate 422.

Belongs to the class-II aminoacyl-tRNA synthetase family. As to quaternary structure, homodimer. It depends on Mg(2+) as a cofactor.

It is found in the cytoplasm. The enzyme catalyses tRNA(Lys) + L-lysine + ATP = L-lysyl-tRNA(Lys) + AMP + diphosphate. The chain is Lysine--tRNA ligase (lysS) from Escherichia coli (strain K12).